The following is a 233-amino-acid chain: Enolase-phosphatase E1 (233 aa).

This sequence belongs to the HAD-like hydrolase superfamily. MasA/MtnC family. Monomer. Mg(2+) is required as a cofactor.

It catalyses the reaction 5-methylsulfanyl-2,3-dioxopentyl phosphate + H2O = 1,2-dihydroxy-5-(methylsulfanyl)pent-1-en-3-one + phosphate. The protein operates within amino-acid biosynthesis; L-methionine biosynthesis via salvage pathway; L-methionine from S-methyl-5-thio-alpha-D-ribose 1-phosphate: step 3/6. It participates in amino-acid biosynthesis; L-methionine biosynthesis via salvage pathway; L-methionine from S-methyl-5-thio-alpha-D-ribose 1-phosphate: step 4/6. In terms of biological role, bifunctional enzyme that catalyzes the enolization of 2,3-diketo-5-methylthiopentyl-1-phosphate (DK-MTP-1-P) into the intermediate 2-hydroxy-3-keto-5-methylthiopentenyl-1-phosphate (HK-MTPenyl-1-P), which is then dephosphorylated to form the acireductone 1,2-dihydroxy-3-keto-5-methylthiopentene (DHK-MTPene). The chain is Enolase-phosphatase E1 from Hahella chejuensis (strain KCTC 2396).